A 992-amino-acid polypeptide reads, in one-letter code: Ankyrin repeat domain-containing protein 18A (992 aa).

5 ANK repeats span residues 67–96 (KDRT…QIDI), 100–129 (LNRT…NPNI), 133–162 (YGNT…NIEA), 166–195 (EGNT…NIHA), and 199–228 (FKRT…RISS). The disordered stretch occupies residues 262-320 (NHLRNDNQETAAMKPANLKKRKERAKAEHNLKVASEEKQERLQRSENKQPQDSQSYGKK). Coiled-coil stretches lie at residues 278-310 (NLKK…ENKQ), 378-618 (KMIT…AERE), 683-713 (ISLL…CLEM), and 743-899 (FKKL…EAFA). Positions 286–310 (AKAEHNLKVASEEKQERLQRSENKQ) are enriched in basic and acidic residues.

The sequence is that of Ankyrin repeat domain-containing protein 18A (ANKRD18A) from Homo sapiens (Human).